The primary structure comprises 113 residues: Nucleoid-associated protein EUBREC_0329 (113 aa).

Over residues 1-12 (MARRGGFPGGMP) the composition is skewed to gly residues. Positions 1–45 (MARRGGFPGGMPGNMNNLMKQAQKMQRQMEEAQKQLEDAEVTAKA) are disordered. Residues 27-37 (RQMEEAQKQLE) show a composition bias toward basic and acidic residues.

The protein belongs to the YbaB/EbfC family. As to quaternary structure, homodimer.

It localises to the cytoplasm. The protein resides in the nucleoid. In terms of biological role, binds to DNA and alters its conformation. May be involved in regulation of gene expression, nucleoid organization and DNA protection. The sequence is that of Nucleoid-associated protein EUBREC_0329 from Agathobacter rectalis (strain ATCC 33656 / DSM 3377 / JCM 17463 / KCTC 5835 / VPI 0990) (Eubacterium rectale).